The following is a 321-amino-acid chain: AA9 family lytic polysaccharide monooxygenase D (321 aa).

The N-terminal stretch at 1-21 is a signal peptide; the sequence is MRSTIVATFAAGLVVASLVAA. H22 serves as a coordination point for Cu(2+). 2 disulfides stabilise this stretch: C75–C192 and C116–C120. N78 carries an N-linked (GlcNAc...) asparagine glycan. Residue H105 participates in Cu(2+) binding. N-linked (GlcNAc...) asparagine glycosylation is present at N152. Positions 178 and 187 each coordinate O2. Y189 is a binding site for Cu(2+). N-linked (GlcNAc...) asparagine glycosylation occurs at N266.

It belongs to the polysaccharide monooxygenase AA9 family. Requires Cu(2+) as cofactor.

The protein resides in the secreted. The catalysed reaction is [(1-&gt;4)-beta-D-glucosyl]n+m + reduced acceptor + O2 = 4-dehydro-beta-D-glucosyl-[(1-&gt;4)-beta-D-glucosyl]n-1 + [(1-&gt;4)-beta-D-glucosyl]m + acceptor + H2O.. Lytic polysaccharide monooxygenase (LPMO) that depolymerizes crystalline and amorphous polysaccharides via the oxidation of scissile alpha- or beta-(1-4)-glycosidic bonds, yielding C1 or C4 oxidation products. Catalysis by LPMOs requires the reduction of the active-site copper from Cu(II) to Cu(I) by a reducing agent and H(2)O(2) or O(2) as a cosubstrate. This Geotrichum candidum (Oospora lactis) protein is AA9 family lytic polysaccharide monooxygenase D.